The sequence spans 106 residues: Small membrane A-kinase anchor protein (106 aa).

Glycine 2 carries the N-myristoyl glycine lipid modification. Cysteine 3 carries the S-palmitoyl cysteine lipid modification. At serine 40 the chain carries Phosphoserine. The interval 62–85 is PKA-RI-binding; it reads ALILEFADRLASEIVEDALQQWAC. Serine 98 is subject to Phosphoserine.

It belongs to the small membrane AKAP family. Interacts with PKA type I regulatory subunits PRKAR1A and PRKAR1B. Also binds to type II regulatory subunits, but at a tenfold lower affinity. In terms of processing, may be palmitoylated at Cys-3. In terms of tissue distribution, widely expressed, with very low levels in spleen and liver.

It is found in the cell membrane. Binds to type I regulatory subunits of protein kinase A (PKA-RI) and may anchor/target them to the plasma membrane. The chain is Small membrane A-kinase anchor protein from Mus musculus (Mouse).